Here is a 756-residue protein sequence, read N- to C-terminus: Transient receptor potential cation channel subfamily V member 2 (756 aa).

Positions 1–45 are disordered; it reads MTSASNPPAFRLETSDGDEEGSAEVNKGKNEPPPMESPFQGEDRN. Positions 1–385 are required for interaction with SLC50A1; the sequence is MTSASNPPAF…LLQEKWDRLI (385 aa). The Cytoplasmic portion of the chain corresponds to 1 to 387; that stretch reads MTSASNPPAF…QEKWDRLIPR (387 aa). Residues serine 15 and serine 77 each carry the phosphoserine modification. 6 ANK repeats span residues 68–110, 111–157, 158–203, 204–239, 240–288, and 289–315; these read NRFD…TEGS, TGKT…DEFY, RGHS…TCFY, FGEL…ATDS, LGNT…ICNH, and QGLT…REFS. A helical membrane pass occupies residues 388-408; it reads FFFNFACYLVYMIIFTIVAYH. Residues 409-428 lie on the Extracellular side of the membrane; it reads QPSLEQPAIPSSKATFGDSM. A helical transmembrane segment spans residues 429–449; it reads LLLGHILILLGGIYLLLGQLW. At 450–455 the chain is on the cytoplasmic side; the sequence is YFWRRR. Residues 456-476 form a helical membrane-spanning segment; that stretch reads LFIWISFMDSYFEILFLVQAL. At 477–490 the chain is on the extracellular side; sequence LTVLSQVLRFVETE. The chain crosses the membrane as a helical span at residues 491-511; the sequence is WYLPLLVSSLVLGWLNLLYYT. Topologically, residues 512–532 are cytoplasmic; sequence RGFQHTGIYSVMIQKVILRDL. A helical membrane pass occupies residues 533–553; that stretch reads LRFLLVYLVFLFGFAVALVSL. Residues 559-583 are disordered; it reads SPKAPEDSNTTVTEKPTLGQEEEPV. The N-linked (GlcNAc...) asparagine glycan is linked to asparagine 567. An intramembrane region (pore-forming) is located at residues 568–604; it reads TTVTEKPTLGQEEEPVPYGGILDASLELFKFTIGMGE. Residues 617 to 637 form a helical membrane-spanning segment; that stretch reads VLLLLLAYVLLTYVLLLNMLI. Residues 638 to 756 lie on the Cytoplasmic side of the membrane; the sequence is ALMSETVNSV…HLPLQVLQSH (119 aa). A disordered region spans residues 719–756; that stretch reads EDPSGAGITGYKKNPTSKPGKNSASEEDHLPLQVLQSH. Positions 732–741 are enriched in polar residues; it reads NPTSKPGKNS. Residues serine 743 and serine 755 each carry the phosphoserine modification.

It belongs to the transient receptor (TC 1.A.4) family. TrpV subfamily. TRPV2 sub-subfamily. In terms of assembly, homotetramer. Interacts with a cAMP-dependent protein kinase type II regulatory subunit (PRKAR2A or PRKAR2B) and ACBD3. Interacts with SLC50A1; the interaction probably occurs intracellularly and depends on TRPV2 N-glycosylation. In terms of processing, N-glycosylated. Phosphorylated by PKA. In terms of tissue distribution, abundantly expressed in spleen, placenta, skeleton muscle, lung and brain.

It is found in the cell membrane. The protein resides in the cytoplasm. The protein localises to the melanosome. The catalysed reaction is Ca(2+)(in) = Ca(2+)(out). It carries out the reaction Mg(2+)(in) = Mg(2+)(out). The enzyme catalyses Na(+)(in) = Na(+)(out). It catalyses the reaction K(+)(in) = K(+)(out). In terms of biological role, calcium-permeable, non-selective cation channel with an outward rectification. Seems to be regulated, at least in part, by IGF1, PDGF and neuropeptide head activator. May transduce physical stimuli in mast cells. Activated by temperatures higher than 52 degrees Celsius; is not activated by vanilloids and acidic pH. This Mus musculus (Mouse) protein is Transient receptor potential cation channel subfamily V member 2 (Trpv2).